An 83-amino-acid polypeptide reads, in one-letter code: Gas vesicle protein G2 (83 aa).

The protein belongs to the gas vesicle GvpG family. In terms of assembly, gvpF to GvpM interact with each other in vitro, and may form multi-subunit complex(es).

It is found in the gas vesicle. Proteins GvpF to GvpM might be involved in nucleating gas vesicle formation. A minor component of the gas vesicle. Gas vesicles are hollow, gas filled proteinaceous nanostructures found in several microbial planktonic microorganisms. They allow positioning of halobacteria at the optimal depth for growth in the poorly aerated, shallow brine pools of their habitat. In terms of biological role, expression of 2 c-vac DNA fragments containing 2 divergently transcribed regions (gvpE-gvpF-gvpG-gvpH-gvpI-gvpJ-gvpK-gvpL-gvpM and gvpA-gvpC-gvpN-gvpO) allows H.volcanii to produce gas vesicles. This Halobacterium salinarum (strain ATCC 700922 / JCM 11081 / NRC-1) (Halobacterium halobium) protein is Gas vesicle protein G2.